Here is a 1928-residue protein sequence, read N- to C-terminus: Lactase/phlorizin hydrolase (1928 aa).

Positions 1 to 21 (MELPWTALFLSTVLLGLSCQG) are cleaved as a signal peptide. Residues 22-867 (SDWESDRNFI…LPVRADFTSR (846 aa)) constitute a propeptide, XBetaGly. Residues 22-1883 (SDWESDRNFI…LMLGIAEAQT (1862 aa)) are Extracellular-facing. The tract at residues 46-289 (NYPPGKQGSD…FIYTLKLEDC (244 aa)) is glycosyl hydrolase-1 1; Region I. Positions 364–856 (VWAAFANQSR…GFSAKKVKRN (493 aa)) are glycosyl hydrolase-1 2; Region II. N-linked (GlcNAc...) asparagine glycans are attached at residues Asn-370, Asn-514, Asn-824, Asn-936, Asn-948, Asn-991, and Asn-1037. The tract at residues 904–1367 (RFRDDFLWGV…DLIANNGMPL (464 aa)) is glycosyl hydrolase-1 3; Region III. Phlorizin hydrolase/Glycosylceramidase activity. Glu-1067 functions as the Proton donor; for phlorizin hydrolase/Glycosylceramidase activity in the catalytic mechanism. Asn-1176 and Asn-1240 each carry an N-linked (GlcNAc...) asparagine glycan. The active-site Nucleophile; for phlorizin hydrolase/Glycosylceramidase activity is the Glu-1274. N-linked (GlcNAc...) asparagine glycosylation is found at Asn-1281 and Asn-1509. Positions 1374 to 1847 (LYGEFPKGFI…CNGFPDPAQG (474 aa)) are glycosyl hydrolase-1 4; Region IV. Lactase activity. Glu-1539 serves as the catalytic Proton donor; for lactase activity. 2 N-linked (GlcNAc...) asparagine glycosylation sites follow: Asn-1657 and Asn-1684. Glu-1750 acts as the Nucleophile; for lactase activity in catalysis. N-linked (GlcNAc...) asparagine glycans are attached at residues Asn-1762 and Asn-1815. A helical transmembrane segment spans residues 1884–1902 (ALYVLFALLLLGACSLAFL). At 1903–1928 (TYNTGRRSKQGNAQPSQHQLSPISSF) the chain is on the cytoplasmic side.

The protein belongs to the glycosyl hydrolase 1 family. As to quaternary structure, homodimer. N-glycosylated. As to expression, intestine.

The protein localises to the apical cell membrane. It carries out the reaction lactose + H2O = beta-D-galactose + D-glucose. The enzyme catalyses phlorizin + H2O = phloretin + beta-D-glucose. The catalysed reaction is D-cellobiose + H2O = beta-D-glucose + D-glucose. It catalyses the reaction quercetin 4'-O-beta-D-glucoside + H2O = quercetin + beta-D-glucose. It carries out the reaction quercetin 3-O-beta-D-glucoside + H2O = quercetin + beta-D-glucose. The enzyme catalyses kaempferol 3-O-beta-D-glucoside + H2O = kaempferol + beta-D-glucose. The catalysed reaction is luteolin 7-O-beta-D-glucoside + H2O = luteolin + beta-D-glucose. It catalyses the reaction luteolin 4'-O-beta-D-glucoside + H2O = luteolin + beta-D-glucose. It carries out the reaction (2S)-naringenin 7-O-beta-D-glucoside + H2O = (2S)-naringenin + beta-D-glucose. The enzyme catalyses eriodictyol-7-O-beta-D-glucoside + H2O = (S)-eriodictyol + beta-D-glucose. The catalysed reaction is apigenin 7-O-beta-D-glucoside + H2O = apigenin + beta-D-glucose. It catalyses the reaction daidzein 7-O-beta-D-glucoside + H2O = daidzein + beta-D-glucose + H(+). It carries out the reaction genistein 7-O-beta-D-glucoside + H2O = genistein + beta-D-glucose. The enzyme catalyses a beta-D-galactosyl-N-acylsphingosine + H2O = a ceramide + beta-D-galactose.. The catalysed reaction is beta-D-glucosyl-(1&lt;-&gt;1')-N-hexadecanoylsphing-4-enine + H2O = N-hexadecanoylsphing-4-enine + beta-D-glucose. It catalyses the reaction beta-D-galactosyl-(1&lt;-&gt;1')-N-hexadecanoylsphing-4-enine + H2O = beta-D-galactose + N-hexadecanoylsphing-4-enine. It carries out the reaction beta-D-galactosyl-(1&lt;-&gt;1')-N-hexadecanoylsphinganine + H2O = N-hexadecanoylsphinganine + beta-D-galactose. The enzyme catalyses beta-D-glucosyl-(1&lt;-&gt;1')-N-hexadecanoylsphinganine + H2O = N-hexadecanoylsphinganine + beta-D-glucose. Its function is as follows. Broad specificity glycosidase of the intestinal brush border membrane that hydrolyzes lactose, the main sugar in mammalian milk, to produce D-glucose and D-galactose. The mature protein is composed of two domains that catalyze the hydrolysis of beta-glucopyranosides and beta-galactopyranosides, with a preference for hydrophilic aglycones (in lactose and cellobiose) for one domain and hydrophobic aglycones (in phlorizin and glycosylceramides) for the other. The sequence is that of Lactase/phlorizin hydrolase from Rattus norvegicus (Rat).